We begin with the raw amino-acid sequence, 502 residues long: Pentatricopeptide repeat-containing protein At4g01990, mitochondrial (502 aa).

The transit peptide at methionine 1–cysteine 13 directs the protein to the mitochondrion. PPR repeat units follow at residues asparagine 139–serine 173, asparagine 174–proline 208, cysteine 209–isoleucine 243, serine 245–asparagine 275, valine 280–arginine 310, asparagine 315–threonine 345, and aspartate 350–cysteine 381.

The protein belongs to the PPR family. P subfamily.

It localises to the mitochondrion. This is Pentatricopeptide repeat-containing protein At4g01990, mitochondrial from Arabidopsis thaliana (Mouse-ear cress).